The following is a 25-amino-acid chain: Pregnancy-associated glycoprotein 74 (25 aa).

N-linked (GlcNAc...) asparagine glycosylation is found at N4 and N21.

The protein belongs to the peptidase A1 family. In terms of processing, N-glycosylated. Placental cotyledons.

It is found in the secreted. Its subcellular location is the extracellular space. The polypeptide is Pregnancy-associated glycoprotein 74 (Bison bison (American bison)).